Reading from the N-terminus, the 243-residue chain is Probable septum site-determining protein MinC (243 aa).

This sequence belongs to the MinC family. Interacts with MinD and FtsZ.

In terms of biological role, cell division inhibitor that blocks the formation of polar Z ring septums. Rapidly oscillates between the poles of the cell to destabilize FtsZ filaments that have formed before they mature into polar Z rings. Prevents FtsZ polymerization. The sequence is that of Probable septum site-determining protein MinC from Wigglesworthia glossinidia brevipalpis.